A 350-amino-acid chain; its full sequence is Tetraacyldisaccharide 4'-kinase (350 aa).

49–56 (TTGGTGKT) contacts ATP.

Belongs to the LpxK family.

The catalysed reaction is a lipid A disaccharide + ATP = a lipid IVA + ADP + H(+). Its pathway is glycolipid biosynthesis; lipid IV(A) biosynthesis; lipid IV(A) from (3R)-3-hydroxytetradecanoyl-[acyl-carrier-protein] and UDP-N-acetyl-alpha-D-glucosamine: step 6/6. In terms of biological role, transfers the gamma-phosphate of ATP to the 4'-position of a tetraacyldisaccharide 1-phosphate intermediate (termed DS-1-P) to form tetraacyldisaccharide 1,4'-bis-phosphate (lipid IVA). The chain is Tetraacyldisaccharide 4'-kinase from Chlorobaculum tepidum (strain ATCC 49652 / DSM 12025 / NBRC 103806 / TLS) (Chlorobium tepidum).